A 278-amino-acid polypeptide reads, in one-letter code: MALKKYNPTTPGQRQLVMVDRSALYKGKPVKTLTEGKHSNGGRNNTGRITVRFRGGGHKKTYRLVDFKRTKVDVPAKVERLEYDPNRTAFIALIKYEDGEQAYILAPQRLAVGDTVIAGAYVDVKPGNVMPLGNMPIGTIVHNVELKIGKGGQIARSAGTYAQLVGRDHDYVIMRLNSGEQRLVHGRCTATIGAVSNPDHMNISIGKAGRTRWLGWRPHNRGVVMNPIDHPHGGGEGRTSGGRHPVTPWGKPTKGKKTRSNKSTDKFILISRHKRKKK.

A disordered region spans residues 226–278 (NPIDHPHGGGEGRTSGGRHPVTPWGKPTKGKKTRSNKSTDKFILISRHKRKKK).

This sequence belongs to the universal ribosomal protein uL2 family. In terms of assembly, part of the 50S ribosomal subunit. Forms a bridge to the 30S subunit in the 70S ribosome.

In terms of biological role, one of the primary rRNA binding proteins. Required for association of the 30S and 50S subunits to form the 70S ribosome, for tRNA binding and peptide bond formation. It has been suggested to have peptidyltransferase activity; this is somewhat controversial. Makes several contacts with the 16S rRNA in the 70S ribosome. This is Large ribosomal subunit protein uL2 from Rhodopseudomonas palustris (strain HaA2).